The primary structure comprises 399 residues: Elongation factor Tu (399 aa).

The 195-residue stretch at 10 to 204 (KPHVNIGTIG…AVDASIPEPE (195 aa)) folds into the tr-type G domain. The segment at 19-26 (GHVDHGKT) is G1. A GTP-binding site is contributed by 19–26 (GHVDHGKT). A Mg(2+)-binding site is contributed by Thr26. The interval 60–64 (GITIN) is G2. Residues 81-84 (DCPG) are G3. GTP-binding positions include 81 to 85 (DCPGH) and 136 to 139 (NKCD). The tract at residues 136–139 (NKCD) is G4. A G5 region spans residues 174-176 (SGL).

This sequence belongs to the TRAFAC class translation factor GTPase superfamily. Classic translation factor GTPase family. EF-Tu/EF-1A subfamily. In terms of assembly, monomer.

The protein localises to the cytoplasm. It carries out the reaction GTP + H2O = GDP + phosphate + H(+). Its function is as follows. GTP hydrolase that promotes the GTP-dependent binding of aminoacyl-tRNA to the A-site of ribosomes during protein biosynthesis. In Synechococcus sp. (strain CC9311), this protein is Elongation factor Tu.